The following is a 624-amino-acid chain: Chaperone protein HtpG (624 aa).

An a; substrate-binding region spans residues 1-336; the sequence is MKGQETRGFQ…SNDLPLNVSR (336 aa). Residues 337–552 form a b region; sequence EILQDSTVTR…ADEMSTQMAK (216 aa). Residues 553 to 624 form a c region; the sequence is LFAAAGQSVP…IRRMNQLLVS (72 aa).

Belongs to the heat shock protein 90 family. As to quaternary structure, homodimer. Post-translationally, UMPylated on a histidine residue by YdiU under ATP-limited conditions.

It is found in the cytoplasm. UMPylation of the chaperone by YdiU negatively regulates its activity, facilitating Salmonella survival under ATP-limited conditions. Functionally, molecular chaperone. Has ATPase activity. This chain is Chaperone protein HtpG, found in Salmonella typhimurium (strain LT2 / SGSC1412 / ATCC 700720).